A 762-amino-acid chain; its full sequence is N,N-dimethylformamidase beta subunit (762 aa).

In terms of assembly, heterotetramer of two DmfA1 (alpha) and two DmfA2 (beta) subunits.

The enzyme catalyses N,N-dimethylformamide + H2O = dimethylamine + formate. Its function is as follows. Hydrolyzes N,N-dimethylformamide, and to a lesser extent N,N-dimethylacetamide and N,N-diethylacetamide. Has no activity against the substituted amides N-methylformamide, N-ethylformamide, N-ethylformamide and N-methylacetamide or the unsubstituted amides formamide, nicotinamide, acetoamide, benzamide, acetamide and acrylamide. The protein is N,N-dimethylformamidase beta subunit of Paracoccus aminophilus.